Consider the following 344-residue polypeptide: Exopolyphosphatase 1 (344 aa).

Residues Val319 to Pro344 are disordered.

Belongs to the GppA/Ppx family. Homodimer.

It carries out the reaction [phosphate](n) + H2O = [phosphate](n-1) + phosphate + H(+). Degradation of inorganic polyphosphates (polyP). Releases orthophosphate processively from the ends of the polyP chain. This Mycobacterium bovis (strain ATCC BAA-935 / AF2122/97) protein is Exopolyphosphatase 1.